Reading from the N-terminus, the 197-residue chain is HTH-type transcriptional regulator BetI (197 aa).

In terms of domain architecture, HTH tetR-type spans 8–68 (PIRRQQLIEA…ATMGYIMSML (61 aa)). The H-T-H motif DNA-binding region spans 31–50 (SIALIARLAGVSNGIISHYF).

The protein operates within amine and polyamine biosynthesis; betaine biosynthesis via choline pathway [regulation]. Functionally, repressor involved in the biosynthesis of the osmoprotectant glycine betaine. It represses transcription of the choline transporter BetT and the genes of BetAB involved in the synthesis of glycine betaine. The protein is HTH-type transcriptional regulator BetI of Pseudomonas fluorescens (strain ATCC BAA-477 / NRRL B-23932 / Pf-5).